The sequence spans 337 residues: Ketol-acid reductoisomerase (NADP(+)) (337 aa).

The KARI N-terminal Rossmann domain occupies 1-180; the sequence is MQVYYDKDAD…GGTKGGVIET (180 aa). Residues 24-27, R47, and S51 each bind NADP(+); that span reads YGSQ. H106 is an active-site residue. An NADP(+)-binding site is contributed by G132. A KARI C-terminal knotted domain is found at 181–326; sequence TFREETETDL…AQLRAMMPWI (146 aa). Mg(2+)-binding residues include D189, E193, E225, and E229. S250 contacts substrate.

Belongs to the ketol-acid reductoisomerase family. Mg(2+) serves as cofactor.

The enzyme catalyses (2R)-2,3-dihydroxy-3-methylbutanoate + NADP(+) = (2S)-2-acetolactate + NADPH + H(+). It carries out the reaction (2R,3R)-2,3-dihydroxy-3-methylpentanoate + NADP(+) = (S)-2-ethyl-2-hydroxy-3-oxobutanoate + NADPH + H(+). It functions in the pathway amino-acid biosynthesis; L-isoleucine biosynthesis; L-isoleucine from 2-oxobutanoate: step 2/4. The protein operates within amino-acid biosynthesis; L-valine biosynthesis; L-valine from pyruvate: step 2/4. In terms of biological role, involved in the biosynthesis of branched-chain amino acids (BCAA). Catalyzes an alkyl-migration followed by a ketol-acid reduction of (S)-2-acetolactate (S2AL) to yield (R)-2,3-dihydroxy-isovalerate. In the isomerase reaction, S2AL is rearranged via a Mg-dependent methyl migration to produce 3-hydroxy-3-methyl-2-ketobutyrate (HMKB). In the reductase reaction, this 2-ketoacid undergoes a metal-dependent reduction by NADPH to yield (R)-2,3-dihydroxy-isovalerate. This Neisseria meningitidis serogroup A / serotype 4A (strain DSM 15465 / Z2491) protein is Ketol-acid reductoisomerase (NADP(+)).